The following is a 204-amino-acid chain: Oocyte-specific homeobox protein 1 (204 aa).

The disordered stretch occupies residues 28 to 73; the sequence is EPARNLAFQMRQSPLVTPGSTTKSSLSVPERNLLKQESQGPSRQSG. Polar residues-rich tracts occupy residues 37 to 54 and 62 to 72; these read MRQS…SSLS and KQESQGPSRQS. A DNA-binding region (homeobox) is located at residues 94–153; that stretch reads FRKERTVYTKEQQGLLQKHFDECQYPNKKKIVELALSVGVTKREIKIWFKNNRAKYRRMN.

It belongs to the paired homeobox family. Obox subfamily. Specifically expressed in oocytes and early embryos.

It is found in the nucleus. Functionally, transcription factor required for zygotic genome activation (ZGA), a critical event in early embryonic development during which the developmental control passes from maternally provided mRNAs to the expression of the zygotic genome after fertilization. Together with other Obox family members, required in early two-cell stage embryos to kick-start the major ZGA wave by facilitating RNA Polymerase II 'pre-configuration', during which RNA Polymerase II relocates from the initial one-cell stage binding targets to ZGA gene promoters and distal enhancers. Mechanistically, promotes recruitment of RNA Polymerase II from (CG-rich) non-ZGA genes to (CG-poor) ZGA genes at the two-cell stage. Binds to regulatory DNA sequences containing a 5'-ACNCCTTTAATCCCAG-3' sequence motif. Most maternal and zygotic Obox family proteins can compensate for one another. In addition to its role in ZGA, promotes embryonic stem cell pluripotency. This is Oocyte-specific homeobox protein 1 from Mus musculus (Mouse).